The primary structure comprises 415 residues: Gamma-glutamyl phosphate reductase (415 aa).

This sequence belongs to the gamma-glutamyl phosphate reductase family.

The protein localises to the cytoplasm. The enzyme catalyses L-glutamate 5-semialdehyde + phosphate + NADP(+) = L-glutamyl 5-phosphate + NADPH + H(+). It participates in amino-acid biosynthesis; L-proline biosynthesis; L-glutamate 5-semialdehyde from L-glutamate: step 2/2. Its function is as follows. Catalyzes the NADPH-dependent reduction of L-glutamate 5-phosphate into L-glutamate 5-semialdehyde and phosphate. The product spontaneously undergoes cyclization to form 1-pyrroline-5-carboxylate. In Mycobacterium bovis (strain BCG / Pasteur 1173P2), this protein is Gamma-glutamyl phosphate reductase.